We begin with the raw amino-acid sequence, 280 residues long: Phosphonates import ATP-binding protein PhnC (280 aa).

The ABC transporter domain occupies 2 to 245 (FELKNVTRRF…AVKEIYGTDK (244 aa)). 34-41 (GRSGAGKS) serves as a coordination point for ATP. The interval 257 to 280 (TSLESKRRAEDVSSGRVAKAAAVH) is disordered. The segment covering 260–269 (ESKRRAEDVS) has biased composition (basic and acidic residues).

The protein belongs to the ABC transporter superfamily. Phosphonates importer (TC 3.A.1.9.1) family. As to quaternary structure, the complex is composed of two ATP-binding proteins (PhnC), two transmembrane proteins (PhnE) and a solute-binding protein (PhnD).

It is found in the cell inner membrane. The catalysed reaction is phosphonate(out) + ATP + H2O = phosphonate(in) + ADP + phosphate + H(+). In terms of biological role, part of the ABC transporter complex PhnCDE involved in phosphonates import. Responsible for energy coupling to the transport system. In Rhizobium johnstonii (strain DSM 114642 / LMG 32736 / 3841) (Rhizobium leguminosarum bv. viciae), this protein is Phosphonates import ATP-binding protein PhnC.